The sequence spans 334 residues: Protein-methionine-sulfoxide reductase catalytic subunit MsrP (334 aa).

Positions 1-44 form a signal peptide, tat-type signal; it reads MKKNQFLKESDVTAESVFFMKRRQVLKALGISAAALSLPHAAHA. Residues asparagine 88, 91–92, cysteine 146, threonine 181, asparagine 233, arginine 238, and 249–251 contribute to the Mo-molybdopterin site; these read YE and GIK.

It belongs to the MsrP family. As to quaternary structure, heterodimer of a catalytic subunit (MsrP) and a heme-binding subunit (MsrQ). It depends on Mo-molybdopterin as a cofactor. Post-translationally, predicted to be exported by the Tat system. The position of the signal peptide cleavage has not been experimentally proven.

It is found in the periplasm. It carries out the reaction L-methionyl-[protein] + a quinone + H2O = L-methionyl-(S)-S-oxide-[protein] + a quinol. It catalyses the reaction L-methionyl-[protein] + a quinone + H2O = L-methionyl-(R)-S-oxide-[protein] + a quinol. Part of the MsrPQ system that repairs oxidized periplasmic proteins containing methionine sulfoxide residues (Met-O), using respiratory chain electrons. Thus protects these proteins from oxidative-stress damage caused by reactive species of oxygen and chlorine generated by the host defense mechanisms. MsrPQ is essential for the maintenance of envelope integrity under bleach stress, rescuing a wide series of structurally unrelated periplasmic proteins from methionine oxidation, including the primary periplasmic chaperone SurA and the lipoprotein Pal. The catalytic subunit MsrP is non-stereospecific, being able to reduce both (R-) and (S-) diastereoisomers of methionine sulfoxide. The chain is Protein-methionine-sulfoxide reductase catalytic subunit MsrP from Escherichia coli O17:K52:H18 (strain UMN026 / ExPEC).